A 237-amino-acid chain; its full sequence is Lectin alpha chain (237 aa).

The Mn(2+) site is built by Glu8 and Asp10. Residues Asp10, Tyr12, Asn14, and Asp19 each contribute to the Ca(2+) site. Tyr12 contributes to the a carbohydrate binding site. Asp19, His24, and Ser34 together coordinate Mn(2+). 99 to 100 (LY) is a binding site for a carbohydrate. Asp208 is a binding site for Ca(2+). Arg228 serves as a coordination point for a carbohydrate.

The protein belongs to the leguminous lectin family. Equilibrium between homodimer and homotetramer. Oligomerization is pH-dependent with homotetramers forming at pH 6.5 and above. Post-translationally, the beta and gamma chains are produced by partial proteolytic processing of the lectin alpha chain by an asparaginyl endopeptidase. Mixture of 60% alpha lectin and 40% of its beta and gamma proteolytic fragments.

Its function is as follows. D-mannose/D-glucose-binding lectin. Has anti-inflammatory activity in rats. Induces histamine release in mast cells from rat. Induces lymphocyte proliferation and IFNG production. The sequence is that of Lectin alpha chain from Dioclea guianensis.